The following is a 115-amino-acid chain: NAD(P)H-quinone oxidoreductase subunit M (115 aa).

Belongs to the complex I NdhM subunit family. In terms of assembly, NDH-1 can be composed of about 15 different subunits; different subcomplexes with different compositions have been identified which probably have different functions.

The protein localises to the cellular thylakoid membrane. The catalysed reaction is a plastoquinone + NADH + (n+1) H(+)(in) = a plastoquinol + NAD(+) + n H(+)(out). The enzyme catalyses a plastoquinone + NADPH + (n+1) H(+)(in) = a plastoquinol + NADP(+) + n H(+)(out). In terms of biological role, NDH-1 shuttles electrons from an unknown electron donor, via FMN and iron-sulfur (Fe-S) centers, to quinones in the respiratory and/or the photosynthetic chain. The immediate electron acceptor for the enzyme in this species is believed to be plastoquinone. Couples the redox reaction to proton translocation, and thus conserves the redox energy in a proton gradient. Cyanobacterial NDH-1 also plays a role in inorganic carbon-concentration. This chain is NAD(P)H-quinone oxidoreductase subunit M, found in Synechococcus sp. (strain WH7803).